A 225-amino-acid polypeptide reads, in one-letter code: NAD(P)H-quinone oxidoreductase subunit K, chloroplastic (225 aa).

[4Fe-4S] cluster contacts are provided by Cys-43, Cys-44, Cys-108, and Cys-139.

This sequence belongs to the complex I 20 kDa subunit family. In terms of assembly, NDH is composed of at least 16 different subunits, 5 of which are encoded in the nucleus. [4Fe-4S] cluster is required as a cofactor.

The protein resides in the plastid. It is found in the chloroplast thylakoid membrane. The enzyme catalyses a plastoquinone + NADH + (n+1) H(+)(in) = a plastoquinol + NAD(+) + n H(+)(out). The catalysed reaction is a plastoquinone + NADPH + (n+1) H(+)(in) = a plastoquinol + NADP(+) + n H(+)(out). Its function is as follows. NDH shuttles electrons from NAD(P)H:plastoquinone, via FMN and iron-sulfur (Fe-S) centers, to quinones in the photosynthetic chain and possibly in a chloroplast respiratory chain. The immediate electron acceptor for the enzyme in this species is believed to be plastoquinone. Couples the redox reaction to proton translocation, and thus conserves the redox energy in a proton gradient. The sequence is that of NAD(P)H-quinone oxidoreductase subunit K, chloroplastic from Nasturtium officinale (Watercress).